The sequence spans 492 residues: Probable beta-1,4-xylosyltransferase IRX14H (492 aa).

Topologically, residues 1–33 (MKLSVFRLSYWNRRGSSFRSSPSLDPSFDGKSP) are cytoplasmic. A helical; Signal-anchor for type II membrane protein membrane pass occupies residues 34–54 (SSVFWFVIHGLCCLISLILGF). Residues 55–492 (RFSHLVLFFL…FDGVKVSATS (438 aa)) lie on the Lumenal side of the membrane. Residues asparagine 99, asparagine 196, and asparagine 314 are each glycosylated (N-linked (GlcNAc...) asparagine). The segment at 457–492 (IKEAKSNSKPRVSKSKSYKEKQEPKAFDGVKVSATS) is disordered. A compositionally biased stretch (basic and acidic residues) spans 473–484 (SYKEKQEPKAFD).

It belongs to the glycosyltransferase 43 family. In terms of tissue distribution, expressed in developing interfascicular fibers and xylem cells in stems and developing secondary xylem in roots.

It localises to the golgi apparatus membrane. In terms of biological role, involved in the synthesis of the hemicellulose glucuronoxylan, a major component of secondary cell walls. Probably involved in the elongation of glucuronoxylan xylosyl backbone. The polypeptide is Probable beta-1,4-xylosyltransferase IRX14H (IRX14H) (Arabidopsis thaliana (Mouse-ear cress)).